Consider the following 414-residue polypeptide: Probable isoprenylcysteine alpha-carbonyl methylesterase ICME (414 aa).

The tract at residues 1–54 (MQPASPVSGDAGPVAEAVPPRGAPQVLVRRRSVPFSPDSPLAPGSRGGGERRST) is disordered. A run of 2 helical transmembrane segments spans residues 90–110 (LAAL…VGYY) and 145–165 (VVAF…GALL). Residues 151 to 153 (GGA) and 222 to 224 (QSA) contribute to the substrate site. Catalysis depends on residues Ser223, Asp323, and His355.

The protein belongs to the AB hydrolase superfamily. Isoprenylcysteine methylesterase family.

It localises to the endoplasmic reticulum membrane. The protein resides in the golgi apparatus membrane. It catalyses the reaction [protein]-C-terminal S-[(2E,6E)-farnesyl]-L-cysteine methyl ester + H2O = [protein]-C-terminal S-[(2E,6E)-farnesyl]-L-cysteine + methanol + H(+). Functionally, catalyzes the demethylation of isoprenylcysteine methylesters. The sequence is that of Probable isoprenylcysteine alpha-carbonyl methylesterase ICME (IMCE) from Oryza sativa subsp. japonica (Rice).